Consider the following 563-residue polypeptide: Arginine--tRNA ligase (563 aa).

The 'HIGH' region signature appears at 121–131; it reads PNIAKPFSIGH.

Belongs to the class-I aminoacyl-tRNA synthetase family. As to quaternary structure, monomer.

The protein resides in the cytoplasm. It carries out the reaction tRNA(Arg) + L-arginine + ATP = L-arginyl-tRNA(Arg) + AMP + diphosphate. The chain is Arginine--tRNA ligase from Streptococcus agalactiae serotype III (strain NEM316).